Consider the following 167-residue polypeptide: UPF0303 protein mlr5144 (167 aa).

Belongs to the UPF0303 family.

This chain is UPF0303 protein mlr5144, found in Mesorhizobium japonicum (strain LMG 29417 / CECT 9101 / MAFF 303099) (Mesorhizobium loti (strain MAFF 303099)).